Consider the following 146-residue polypeptide: Anti-sigma F factor (146 aa).

This sequence belongs to the anti-sigma-factor family.

The catalysed reaction is L-seryl-[protein] + ATP = O-phospho-L-seryl-[protein] + ADP + H(+). The enzyme catalyses L-threonyl-[protein] + ATP = O-phospho-L-threonyl-[protein] + ADP + H(+). In terms of biological role, binds to sigma F and blocks its ability to form an RNA polymerase holoenzyme (E-sigma F). Phosphorylates SpoIIAA on a serine residue. This phosphorylation may enable SpoIIAA to act as an anti-anti-sigma factor that counteracts SpoIIAB and thus releases sigma F from inhibition. In Bacillus cytotoxicus (strain DSM 22905 / CIP 110041 / 391-98 / NVH 391-98), this protein is Anti-sigma F factor.